The primary structure comprises 227 residues: Phosphoribosylformylglycinamidine synthase subunit PurQ (227 aa).

In terms of domain architecture, Glutamine amidotransferase type-1 spans Arg-2 to Arg-227. The active-site Nucleophile is the Cys-85. Active-site residues include His-200 and Glu-202.

As to quaternary structure, part of the FGAM synthase complex composed of 1 PurL, 1 PurQ and 2 PurS subunits.

Its subcellular location is the cytoplasm. The enzyme catalyses N(2)-formyl-N(1)-(5-phospho-beta-D-ribosyl)glycinamide + L-glutamine + ATP + H2O = 2-formamido-N(1)-(5-O-phospho-beta-D-ribosyl)acetamidine + L-glutamate + ADP + phosphate + H(+). It carries out the reaction L-glutamine + H2O = L-glutamate + NH4(+). The protein operates within purine metabolism; IMP biosynthesis via de novo pathway; 5-amino-1-(5-phospho-D-ribosyl)imidazole from N(2)-formyl-N(1)-(5-phospho-D-ribosyl)glycinamide: step 1/2. Its function is as follows. Part of the phosphoribosylformylglycinamidine synthase complex involved in the purines biosynthetic pathway. Catalyzes the ATP-dependent conversion of formylglycinamide ribonucleotide (FGAR) and glutamine to yield formylglycinamidine ribonucleotide (FGAM) and glutamate. The FGAM synthase complex is composed of three subunits. PurQ produces an ammonia molecule by converting glutamine to glutamate. PurL transfers the ammonia molecule to FGAR to form FGAM in an ATP-dependent manner. PurS interacts with PurQ and PurL and is thought to assist in the transfer of the ammonia molecule from PurQ to PurL. This is Phosphoribosylformylglycinamidine synthase subunit PurQ from Thermus thermophilus (strain ATCC 27634 / DSM 579 / HB8).